The primary structure comprises 211 residues: Ribosomal RNA small subunit methyltransferase G (211 aa).

S-adenosyl-L-methionine-binding positions include glycine 81, leucine 86, 132-133 (VE), and arginine 147.

The protein belongs to the methyltransferase superfamily. RNA methyltransferase RsmG family.

It is found in the cytoplasm. It catalyses the reaction guanosine(527) in 16S rRNA + S-adenosyl-L-methionine = N(7)-methylguanosine(527) in 16S rRNA + S-adenosyl-L-homocysteine. Functionally, specifically methylates the N7 position of guanine in position 527 of 16S rRNA. The polypeptide is Ribosomal RNA small subunit methyltransferase G (Actinobacillus succinogenes (strain ATCC 55618 / DSM 22257 / CCUG 43843 / 130Z)).